Consider the following 398-residue polypeptide: Nicotinate phosphoribosyltransferase (398 aa).

Residue histidine 222 is modified to Phosphohistidine; by autocatalysis.

Belongs to the NAPRTase family. Post-translationally, transiently phosphorylated on a His residue during the reaction cycle. Phosphorylation strongly increases the affinity for substrates and increases the rate of nicotinate D-ribonucleotide production. Dephosphorylation regenerates the low-affinity form of the enzyme, leading to product release.

The enzyme catalyses nicotinate + 5-phospho-alpha-D-ribose 1-diphosphate + ATP + H2O = nicotinate beta-D-ribonucleotide + ADP + phosphate + diphosphate. The protein operates within cofactor biosynthesis; NAD(+) biosynthesis; nicotinate D-ribonucleotide from nicotinate: step 1/1. Catalyzes the synthesis of beta-nicotinate D-ribonucleotide from nicotinate and 5-phospho-D-ribose 1-phosphate at the expense of ATP. The chain is Nicotinate phosphoribosyltransferase from Acidovorax ebreus (strain TPSY) (Diaphorobacter sp. (strain TPSY)).